Reading from the N-terminus, the 337-residue chain is uncharacterized protein (337 aa).

It belongs to the NAD(P)-dependent epimerase/dehydratase family.

This is an uncharacterized protein from Escherichia coli (strain K12).